A 515-amino-acid chain; its full sequence is Signal transduction histidine-protein kinase/phosphatase MprB (515 aa).

Residues Met-1 to Arg-24 are Cytoplasmic-facing. The chain crosses the membrane as a helical span at residues Val-25 to Tyr-45. Residues Ala-46–Thr-165 are Extracellular-facing. Residues Val-166–Ala-186 form a helical membrane-spanning segment. Residues Arg-187–Glu-239 enclose the HAMP domain. The Cytoplasmic segment spans residues Arg-187 to Leu-515. Residues Asp-247 to Pro-467 form the Histidine kinase domain. Position 250 is a phosphohistidine; by autocatalysis (His-250). The disordered stretch occupies residues Leu-468–Leu-515.

Mg(2+) is required as a cofactor. Requires Mn(2+) as cofactor. In terms of processing, autophosphorylated.

It is found in the cell membrane. The catalysed reaction is ATP + protein L-histidine = ADP + protein N-phospho-L-histidine.. Its function is as follows. Member of the two-component regulatory system MprB/MprA which contributes to maintaining a balance among several systems involved in stress resistance and is required for establishment and maintenance of persistent infection in the host. In response to environmental signals MprB acts both as a membrane-associated protein kinase that undergoes autophosphorylation and subsequently transfers the phosphate to MprA, and a protein phosphatase that dephosphorylates phospho-MprA. In Mycobacterium sp. (strain JLS), this protein is Signal transduction histidine-protein kinase/phosphatase MprB (mprB).